The following is a 360-amino-acid chain: Malonyl CoA-acyl carrier protein transacylase, mitochondrial (360 aa).

The N-terminal 24 residues, 1 to 24 (MKLLTFPGQGTSISISILKAIIRN), are a transit peptide targeting the mitochondrion. Active-site residues include Ser-105 and His-235.

It belongs to the FabD family.

Its subcellular location is the mitochondrion. The enzyme catalyses holo-[ACP] + malonyl-CoA = malonyl-[ACP] + CoA. It functions in the pathway lipid metabolism; fatty acid biosynthesis. Functionally, involved in biosynthesis of fatty acids in mitochondria. The polypeptide is Malonyl CoA-acyl carrier protein transacylase, mitochondrial (MCT1) (Saccharomyces cerevisiae (strain ATCC 204508 / S288c) (Baker's yeast)).